We begin with the raw amino-acid sequence, 310 residues long: MGLCKCPKRKVTNLFCFEHRVNVCEHCLVANHAKCIVQSYLQWLQDSDYNPNCRLCNIPLASRETTRLVCYDLFHWACLNERAAQLPRNTAPAGYQCPSCNGPIFPPTNLAGPVASALREKLATVNWARAGLGLPLIDEVVSPEPEPLNTSDFSDWSSFNASSTPGPEEVDSASAAPAFYSQAPRPPASPGRPEQHTVIHMGNPEPLTHAPRKVYDTRDDDRTPGLHGDCDDDKYRRRPALGWLARLLRSRAGSRKRPLTLLQRAGLLLLLGLLGFLALLALMSRLGRAAADSDPNLDPLMNPHIRVGPS.

The B box-type; degenerate zinc-finger motif lies at M1–W43. Residues M1 to G266 lie on the Cytoplasmic side of the membrane. An RING-type; degenerate zinc finger spans residues C53–N101. The interval P145 to D231 is disordered. A compositionally biased stretch (polar residues) spans L148–P165. A compositionally biased stretch (basic and acidic residues) spans K213–P224. Residues L267–G287 traverse the membrane as a helical segment. Topologically, residues R288–S310 are lumenal.

It belongs to the ZFPL1 family. Interacts with GOLGA2/GM130. Post-translationally, phosphorylated. As to expression, expressed strongly in the exocrine pancreas.

It localises to the golgi apparatus. Its subcellular location is the cis-Golgi network membrane. Required for cis-Golgi integrity and efficient ER to Golgi transport. Involved in the maintenance of the integrity of the cis-Golgi, possibly via its interaction with GOLGA2/GM130. The sequence is that of Zinc finger protein-like 1 (ZFPL1) from Homo sapiens (Human).